The chain runs to 247 residues: ATP synthase subunit a, chloroplastic (247 aa).

5 helical membrane-spanning segments follow: residues Gln-38–Val-58, Val-95–Leu-115, Ile-134–Ser-154, Leu-199–Leu-219, and Gly-220–Gly-240.

This sequence belongs to the ATPase A chain family. F-type ATPases have 2 components, CF(1) - the catalytic core - and CF(0) - the membrane proton channel. CF(1) has five subunits: alpha(3), beta(3), gamma(1), delta(1), epsilon(1). CF(0) has four main subunits: a, b, b' and c.

The protein localises to the plastid. It is found in the chloroplast thylakoid membrane. In terms of biological role, key component of the proton channel; it plays a direct role in the translocation of protons across the membrane. The polypeptide is ATP synthase subunit a, chloroplastic (Brachypodium distachyon (Purple false brome)).